The chain runs to 527 residues: Serine/threonine-protein kinase NLK (527 aa).

Sufficient for interaction with DAPK3 regions lie at residues 1 to 125 (MSLC…KAHH) and 124 to 416 (HHHQ…SKRI). Required for interaction with TAB2 stretches follow at residues 1-304 (MSLC…VVTQ) and 434-527 (YHTC…LVWE). Disordered stretches follow at residues 22 to 72 (AAAA…SSAA) and 90 to 140 (QQPY…DIEP). Residues 26–54 (GHHHHHHHHLPHLPPPHLHHHHHPQHHLH) are compositionally biased toward basic residues. The span at 103–119 (PGPAAAAPAQVQAAAAA) shows a compositional bias: low complexity. A compositionally biased stretch (basic residues) spans 122-131 (KAHHHQHSHH). A Protein kinase domain is found at 138-427 (IEPDRPIGYG…AKDALAHPYL (290 aa)). ATP is bound by residues 144–152 (IGYGAFGVV) and K167. The active-site Proton acceptor is D264. Position 298 is a phosphothreonine; by autocatalysis (T298). Positions 298–300 (TQE) match the TQE motif. The segment at 428-527 (DEGRLRYHTC…EMPPSPLVWE (100 aa)) is required for homodimerization and kinase activation and localization to the nucleus. Residue S522 is modified to Phosphoserine.

This sequence belongs to the protein kinase superfamily. CMGC Ser/Thr protein kinase family. MAP kinase subfamily. Homodimer. Homodimerization is required for intermolecular autophosphorylation, kinase activation and nuclear localization. May interact with components of cullin-RING-based SCF (SKP1-CUL1-F-box protein) E3 ubiquitin-protein ligase complexes. Interacts with LEF1, MEF2A, MYBL1 and MYBL2. Interacts with the upstream activating kinases HIPK2 and MAP3K7/TAK1. Interaction with MAP3K7/TAK1 seems to be indirect, and may be mediated by other proteins such as STAT3, TAB1 and TAB2. Interacts with and phosphorylates a number of transcription factors including FOXO1, FOXO3, FOXO4, MYB, NOTCH1 and TCF7L2/TCF4. Interacts with DAPK3/ZIPK, and this interaction may disrupt interaction with transcription factors such as TCF7L2/TCF4. Interacts with RNF138/NARF. Interacts with ATF5; the interaction stabilizes ATF5 at the protein level in a kinase-independent manner. It depends on Mg(2+) as a cofactor. Post-translationally, phosphorylated on Thr-298. Intermolecular autophosphorylation on Thr-298 activates the enzyme.

Its subcellular location is the nucleus. It is found in the cytoplasm. It carries out the reaction L-seryl-[protein] + ATP = O-phospho-L-seryl-[protein] + ADP + H(+). The catalysed reaction is L-threonyl-[protein] + ATP = O-phospho-L-threonyl-[protein] + ADP + H(+). Its activity is regulated as follows. Activated by dimerization and subsequent intermolecular autophosphorylation on Thr-298. Activated by the non-canonical Wnt signaling pathway, in which WNT5A treatment leads to activation of MAP3K7/TAK1 and HIPK2, which subsequently phosphorylates and activates this protein. Other cytokines such as IL6 may also activate this regulatory circuit. Serine/threonine-protein kinase that regulates a number of transcription factors with key roles in cell fate determination. Positive effector of the non-canonical Wnt signaling pathway, acting downstream of WNT5A, MAP3K7/TAK1 and HIPK2. Negative regulator of the canonical Wnt/beta-catenin signaling pathway. Binds to and phosphorylates TCF7L2/TCF4 and LEF1, promoting the dissociation of the TCF7L2/LEF1/beta-catenin complex from DNA, as well as the ubiquitination and subsequent proteolysis of LEF1. Together these effects inhibit the transcriptional activation of canonical Wnt/beta-catenin target genes. Negative regulator of the Notch signaling pathway. Binds to and phosphorylates NOTCH1, thereby preventing the formation of a transcriptionally active ternary complex of NOTCH1, RBPJ/RBPSUH and MAML1. Negative regulator of the MYB family of transcription factors. Phosphorylation of MYB leads to its subsequent proteolysis while phosphorylation of MYBL1 and MYBL2 inhibits their interaction with the coactivator CREBBP. Other transcription factors may also be inhibited by direct phosphorylation of CREBBP itself. Acts downstream of IL6 and MAP3K7/TAK1 to phosphorylate STAT3, which is in turn required for activation of NLK by MAP3K7/TAK1. Upon IL1B stimulus, cooperates with ATF5 to activate the transactivation activity of C/EBP subfamily members. Phosphorylates ATF5 but also stabilizes ATF5 protein levels in a kinase-independent manner. Acts as an inhibitor of the mTORC1 complex in response to osmotic stress by mediating phosphorylation of RPTOR, thereby preventing recruitment of the mTORC1 complex to lysosomes. The chain is Serine/threonine-protein kinase NLK (NLK) from Homo sapiens (Human).